Consider the following 858-residue polypeptide: Cone cGMP-specific 3',5'-cyclic phosphodiesterase subunit alpha' (858 aa).

GAF domains are found at residues 75-224 (TPEQ…SIIL) and 256-433 (DVER…GWSL). Residues S97, D116, 169–172 (DKQT), and T176 each bind 3',5'-cyclic GMP. A PDEase domain is found at 486 to 819 (EEKQLVAILK…VEWKSLADEY (334 aa)). Catalysis depends on H562, which acts as the Proton donor. A divalent metal cation-binding residues include H566, H602, D603, and D723. Positions 830–852 (AKKQEGGAEKAAEDSGGGDDKKS) are enriched in basic and acidic residues. The disordered stretch occupies residues 830–858 (AKKQEGGAEKAAEDSGGGDDKKSKTCLML). A Cysteine methyl ester modification is found at C855. C855 is lipidated: S-geranylgeranyl cysteine. Residues 856 to 858 (LML) constitute a propeptide, removed in mature form.

It belongs to the cyclic nucleotide phosphodiesterase family. As to quaternary structure, composed of two alpha' subunits that are associated with 3 smaller proteins of 11, 13, and 15 kDa. A divalent metal cation is required as a cofactor.

It localises to the cell membrane. The enzyme catalyses 3',5'-cyclic GMP + H2O = GMP + H(+). In terms of biological role, as cone-specific cGMP phosphodiesterase, it plays an essential role in light detection and cone phototransduction by rapidly decreasing intracellular levels of cGMP. The chain is Cone cGMP-specific 3',5'-cyclic phosphodiesterase subunit alpha' (PDE6C) from Homo sapiens (Human).